A 203-amino-acid polypeptide reads, in one-letter code: ATP-dependent Clp protease proteolytic subunit 2 (203 aa).

The Nucleophile role is filled by serine 101. Residue histidine 126 is part of the active site.

This sequence belongs to the peptidase S14 family. As to quaternary structure, fourteen ClpP subunits assemble into 2 heptameric rings which stack back to back to give a disk-like structure with a central cavity, resembling the structure of eukaryotic proteasomes.

The protein resides in the cytoplasm. The catalysed reaction is Hydrolysis of proteins to small peptides in the presence of ATP and magnesium. alpha-casein is the usual test substrate. In the absence of ATP, only oligopeptides shorter than five residues are hydrolyzed (such as succinyl-Leu-Tyr-|-NHMec, and Leu-Tyr-Leu-|-Tyr-Trp, in which cleavage of the -Tyr-|-Leu- and -Tyr-|-Trp bonds also occurs).. Its function is as follows. Cleaves peptides in various proteins in a process that requires ATP hydrolysis. Has a chymotrypsin-like activity. Plays a major role in the degradation of misfolded proteins. The protein is ATP-dependent Clp protease proteolytic subunit 2 of Prochlorococcus marinus (strain MIT 9312).